The primary structure comprises 397 residues: Probable tRNA sulfurtransferase (397 aa).

The 106-residue stretch at 60-165 (HPVIEKLQEV…KEGTYITAYD (106 aa)) folds into the THUMP domain. Residues 183–184 (ML), 208–209 (HF), Arg-265, Gly-287, and Gln-296 contribute to the ATP site.

The protein belongs to the ThiI family.

It localises to the cytoplasm. The catalysed reaction is [ThiI sulfur-carrier protein]-S-sulfanyl-L-cysteine + a uridine in tRNA + 2 reduced [2Fe-2S]-[ferredoxin] + ATP + H(+) = [ThiI sulfur-carrier protein]-L-cysteine + a 4-thiouridine in tRNA + 2 oxidized [2Fe-2S]-[ferredoxin] + AMP + diphosphate. It carries out the reaction [ThiS sulfur-carrier protein]-C-terminal Gly-Gly-AMP + S-sulfanyl-L-cysteinyl-[cysteine desulfurase] + AH2 = [ThiS sulfur-carrier protein]-C-terminal-Gly-aminoethanethioate + L-cysteinyl-[cysteine desulfurase] + A + AMP + 2 H(+). It participates in cofactor biosynthesis; thiamine diphosphate biosynthesis. Catalyzes the ATP-dependent transfer of a sulfur to tRNA to produce 4-thiouridine in position 8 of tRNAs, which functions as a near-UV photosensor. Also catalyzes the transfer of sulfur to the sulfur carrier protein ThiS, forming ThiS-thiocarboxylate. This is a step in the synthesis of thiazole, in the thiamine biosynthesis pathway. The sulfur is donated as persulfide by IscS. The polypeptide is Probable tRNA sulfurtransferase (Anoxybacillus flavithermus (strain DSM 21510 / WK1)).